Consider the following 711-residue polypeptide: MDIEDEENMSSSSTDIKENRNLDNMPPKDSSTPGPGEGIPLSNGGGGSTSRKRPLEEGSNGHSKYRLKKRRKTPGPVLPKNALMQLNEIKPGLQYMLLSQTGPVHAPLFVMSVEVNGQVFEGSGPTKKKAKLHAAEKALRSFVQFPNASEAHLAMGRTLSVNTDFTSDQADFPDTLFNGFETPDKSEPPFYVGSNGDDSFSSSGDVSLSASPVPASLTQPPLPIPPPFPPPSGKNPVMILNELRPGLKYDFLSESGESHAKSFVMSVVVDGQFFEGSGRNKKLAKARAAQSALATVFNLHLDQTPSRQPVLSEGLQLHLPQVLADAVSRLVLGKFSDLTDNFSSPHARRKVLSGVVMTTGTDVKDAKVISVSTGTKCINGEYMSDRGLALNDCHAEIISRRSLLRFLYAQLELYLNNKEDQKKSIFQKSERGGFRLKDTVQFHLYISTSPCGDARIFSPHEPVLEGMTPDSHQLTEPADRHPNRKARGQLRTKIESGEGTIPVRSNASIQTWDGVLQGERLLTMSCSDKIARWNVVGIQGSLLSIFVEPIYFSSIILGSLYHGDHLSRAMYQRISNIEDLPPLYTLNKPLLSGISNAEARQPGKAPNFSVNWTVGDATIEVINATTGKDELGRPSRLCKHALYCRWMRVHGKVPPHLLRTKITKPTTYHESKLAAREYQAAKARLFTAFIKAGLGAWVEKPTEQDQFSFTP.

A disordered region spans residues 1–78; that stretch reads MDIEDEENMS…KRRKTPGPVL (78 aa). Over residues 63-73 the composition is skewed to basic residues; sequence SKYRLKKRRKT. Residues 78-144 enclose the DRBM 1 domain; it reads LPKNALMQLN…AEKALRSFVQ (67 aa). Interaction with substrate RNA regions lie at residues 83-88 and 104-105; these read LMQLNE and VH. Serine 149 is subject to Phosphoserine. The segment at 176–220 is disordered; the sequence is LFNGFETPDKSEPPFYVGSNGDDSFSSSGDVSLSASPVPASLTQP. A compositionally biased stretch (low complexity) spans 192–213; that stretch reads VGSNGDDSFSSSGDVSLSASPV. The 68-residue stretch at 231-298 folds into the DRBM 2 domain; it reads PSGKNPVMIL…AQSALATVFN (68 aa). Interaction with substrate RNA stretches follow at residues 237–242 and histidine 259; that span reads VMILNE. Positions 370–707 constitute an A to I editase domain; the sequence is SVSTGTKCIN…VEKPTEQDQF (338 aa). Histidine 394 lines the Zn(2+) pocket. The active-site Proton donor is the glutamate 396. 1D-myo-inositol hexakisphosphate is bound by residues arginine 400 and arginine 401. The Zn(2+) site is built by cysteine 451 and cysteine 526. Positions 529, 532, 639, 672, 682, and 700 each coordinate 1D-myo-inositol hexakisphosphate.

In terms of assembly, homodimer. Homodimerization is essential for its catalytic activity. Can form heterodimers with isoform 5 of ADAR/ADAR1. It depends on 1D-myo-inositol hexakisphosphate as a cofactor.

It localises to the nucleus. It is found in the nucleolus. It catalyses the reaction adenosine in double-stranded RNA + H2O + H(+) = inosine in double-stranded RNA + NH4(+). Catalyzes the hydrolytic deamination of adenosine to inosine in double-stranded RNA (dsRNA) referred to as A-to-I RNA editing. This may affect gene expression and function in a number of ways that include mRNA translation by changing codons and hence the amino acid sequence of proteins; pre-mRNA splicing by altering splice site recognition sequences; RNA stability by changing sequences involved in nuclease recognition; genetic stability in the case of RNA virus genomes by changing sequences during viral RNA replication; and RNA structure-dependent activities such as microRNA production or targeting or protein-RNA interactions. Can edit both viral and cellular RNAs and can edit RNAs at multiple sites (hyper-editing) or at specific sites (site-specific editing). Its cellular RNA substrates include: bladder cancer-associated protein (BLCAP), neurotransmitter receptors for glutamate (GRIA2 and GRIK2) and serotonin (HTR2C), GABA receptor (GABRA3) and potassium voltage-gated channel (KCNA1). Site-specific RNA editing of transcripts encoding these proteins results in amino acid substitutions which consequently alter their functional activities. Edits GRIA2 at both the Q/R and R/G sites efficiently but converts the adenosine in hotspot1 much less efficiently. Can inhibit cell proliferation and migration and can stimulate exocytosis. This is Double-stranded RNA-specific editase 1 (Adarb1) from Mus musculus (Mouse).